The primary structure comprises 166 residues: MTQSAPEFIATADLVDIIGDNAQSCDTQFQNLGGATEFHGIITTVKCFQDNALLKSILSEDNPGGVLVIDGDASVHTALVGDIIAGLGKDHGWSGVIVNGAIRDSAVIGTMTFGCKALGTNPRKSTKTGSGERDVVVSIGGIDFIPGHYVYADSDGIIVTEAPIKQ.

Residues 81-84 and arginine 103 contribute to the substrate site; that span reads GDII. Aspartate 104 is an a divalent metal cation binding site.

It belongs to the class II aldolase/RraA-like family. Homotrimer. A divalent metal cation is required as a cofactor.

It catalyses the reaction 4-hydroxy-4-methyl-2-oxoglutarate = 2 pyruvate. The enzyme catalyses oxaloacetate + H(+) = pyruvate + CO2. Its function is as follows. Catalyzes the aldol cleavage of 4-hydroxy-4-methyl-2-oxoglutarate (HMG) into 2 molecules of pyruvate. Also contains a secondary oxaloacetate (OAA) decarboxylase activity due to the common pyruvate enolate transition state formed following C-C bond cleavage in the retro-aldol and decarboxylation reactions. This chain is Putative 4-hydroxy-4-methyl-2-oxoglutarate aldolase, found in Corynebacterium glutamicum (strain ATCC 13032 / DSM 20300 / JCM 1318 / BCRC 11384 / CCUG 27702 / LMG 3730 / NBRC 12168 / NCIMB 10025 / NRRL B-2784 / 534).